The primary structure comprises 156 residues: Small ribosomal subunit protein uS7 (156 aa).

It belongs to the universal ribosomal protein uS7 family. In terms of assembly, part of the 30S ribosomal subunit. Contacts proteins S9 and S11.

One of the primary rRNA binding proteins, it binds directly to 16S rRNA where it nucleates assembly of the head domain of the 30S subunit. Is located at the subunit interface close to the decoding center, probably blocks exit of the E-site tRNA. The polypeptide is Small ribosomal subunit protein uS7 (Shewanella amazonensis (strain ATCC BAA-1098 / SB2B)).